Consider the following 610-residue polypeptide: Oxidoreductase ptaE (610 aa).

The signal sequence occupies residues 1-20 (MFQSILFLAFYGRPVFGSAA). Plastocyanin-like domains are found at residues 67–181 (QIIS…HGPS) and 191–344 (PWLL…IVRY). N-linked (GlcNAc...) asparagine glycosylation is found at Asn105, Asn111, Asn262, Asn277, Asn330, Asn356, Asn401, Asn409, Asn427, and Asn602. Residues 425–568 (YVNWSEPSVK…IAIQFLEQPS (144 aa)) enclose the Plastocyanin-like 3 domain.

It belongs to the multicopper oxidase family.

Its pathway is secondary metabolite biosynthesis. Oxidoreductase; part of the gene cluster that mediates the biosynthesis of pestheic acid, a diphenyl ether which is a biosynthetic precursor of the unique chloropupukeananes. The biosynthesis initiates from condensation of acetate and malonate units catalyzed by the non-reducing PKS ptaA. As the ptaA protein is TE/CLC domain-deficient, hydrolysis and Claisen cyclization of the polyketide could be catalyzed by ptaB containing a beta-lactamase domain. The ptaB protein might hydrolyze the thioester bond between the ACP of ptaA and the intermediate to release atrochrysone carboxylic acid, which is spontaneously dehydrated to form endocrocin anthrone. Endocrocin anthrone is then converted to endocrocin, catalyzed by the anthrone oxygenase ptaC. Spontaneous decarboxylation of endocrocin occurs to generate emodin. An O-methyltransferase (ptaH or ptaI) could methylate emodin to form physcion. PtaJ could then catalyze the oxidative cleavage of physcion, and rotation of the intermediate could then afford desmethylisosulochrin. PtaF, a putative NADH-dependent oxidoreductase, might also participate in the oxidative cleavage step. Desmethylisosulochrin is then transformed by another O-methyltransferase (ptaH or ptaI) to form isosulochrin. Chlorination of isosulochrin by ptaM in the cyclohexadienone B ring then produces chloroisosulochrin. PtaE is responsible for the oxidative coupling reactions of both benzophenones isosulouchrin and chloroisosulochrin to RES-1214-1 and pestheic acid respectively, regardless of chlorination. This Pestalotiopsis fici (strain W106-1 / CGMCC3.15140) protein is Oxidoreductase ptaE.